The following is a 739-amino-acid chain: Tegument protein UL47 (739 aa).

Residues 1-13 show a composition bias toward basic and acidic residues; it reads MDAARDGRPERRR. Disordered stretches follow at residues 1–123 and 154–198; these read MDAA…QDYL and QFPP…DDAA. The Nuclear localization signal motif lies at 10–30; that stretch reads ERRRAVSGTYRTHPFQRPSAR. Positions 28–53 are enriched in basic residues; the sequence is SARRSAGRPARCGRRGRGAPRVRRPR. Residues 62 to 87 show a composition bias toward acidic residues; the sequence is EDTSEDENVYDYIDGDSSDSADDYDS. The Nuclear export signal motif lies at 94–121; the sequence is RGPNHGAGDAMDTDAPPERAPEGGAPQD. Positions 483–493 match the Nuclear export signal motif; it reads LSAYLTLFVAL.

The protein belongs to the alphaherpesvirinae HHV-1 UL47 family. In terms of assembly, interacts with US3 kinase. Interacts with UL31 and UL34; these interactions seem important for efficient virion nuclear egress. Interacts with UL41/VHS. Interacts with host DDB1. Monoubiquitinated. Post-translationally, phosphorylated by US3. This phosphorylation is required for proper nuclear localization.

The protein localises to the virion tegument. Its subcellular location is the host nucleus. It localises to the host cytoplasm. Tegument protein that can bind to various RNA transcripts. Plays a role in the attenuation of selective viral and cellular mRNA degradation by modulating the activity of host shutoff RNase UL41/VHS. Also plays a role in the primary envelopment of virions in the perinuclear space, probably by interacting with two nuclear egress proteins UL31 and UL34. This is Tegument protein UL47 from Bovine herpesvirus 1.1 (strain Cooper) (BoHV-1).